The chain runs to 154 residues: MESHTMLSAQSRWRNAMADTFAMVVYCTVVNMLIEIFLSGMSFEQSLSSRLVAIPVNILIACPYGIYRDFFMRQARKMNNKGWTKTIADILAYVTFQSPVYAAILWVIGADWHQIVAAVSSNMVISMMMGAVYGYFLDYCRRLFKVTSYQQLKA.

4 consecutive transmembrane segments (helical) span residues 21 to 41 (FAMV…LSGM), 51 to 71 (LVAI…RDFF), 90 to 110 (ILAY…VIGA), and 115 to 135 (IVAA…VYGY).

This sequence belongs to the AlaE exporter family.

Its subcellular location is the cell inner membrane. Its function is as follows. Exports L-alanine. The protein is L-alanine exporter AlaE of Escherichia fergusonii (strain ATCC 35469 / DSM 13698 / CCUG 18766 / IAM 14443 / JCM 21226 / LMG 7866 / NBRC 102419 / NCTC 12128 / CDC 0568-73).